A 179-amino-acid polypeptide reads, in one-letter code: Large ribosomal subunit protein uL5 (179 aa).

It belongs to the universal ribosomal protein uL5 family. As to quaternary structure, part of the 50S ribosomal subunit; part of the 5S rRNA/L5/L18/L25 subcomplex. Contacts the 5S rRNA and the P site tRNA. Forms a bridge to the 30S subunit in the 70S ribosome.

This is one of the proteins that bind and probably mediate the attachment of the 5S RNA into the large ribosomal subunit, where it forms part of the central protuberance. In the 70S ribosome it contacts protein S13 of the 30S subunit (bridge B1b), connecting the 2 subunits; this bridge is implicated in subunit movement. Contacts the P site tRNA; the 5S rRNA and some of its associated proteins might help stabilize positioning of ribosome-bound tRNAs. In Staphylococcus epidermidis (strain ATCC 35984 / DSM 28319 / BCRC 17069 / CCUG 31568 / BM 3577 / RP62A), this protein is Large ribosomal subunit protein uL5.